The chain runs to 366 residues: tRNA/tmRNA (uracil-C(5))-methyltransferase (366 aa).

5 residues coordinate S-adenosyl-L-methionine: glutamine 190, tyrosine 218, asparagine 223, glutamate 239, and aspartate 299. Cysteine 324 functions as the Nucleophile in the catalytic mechanism. Glutamate 358 (proton acceptor) is an active-site residue.

Belongs to the class I-like SAM-binding methyltransferase superfamily. RNA M5U methyltransferase family. TrmA subfamily.

The catalysed reaction is uridine(54) in tRNA + S-adenosyl-L-methionine = 5-methyluridine(54) in tRNA + S-adenosyl-L-homocysteine + H(+). It carries out the reaction uridine(341) in tmRNA + S-adenosyl-L-methionine = 5-methyluridine(341) in tmRNA + S-adenosyl-L-homocysteine + H(+). Functionally, dual-specificity methyltransferase that catalyzes the formation of 5-methyluridine at position 54 (m5U54) in all tRNAs, and that of position 341 (m5U341) in tmRNA (transfer-mRNA). In Cronobacter sakazakii (strain ATCC BAA-894) (Enterobacter sakazakii), this protein is tRNA/tmRNA (uracil-C(5))-methyltransferase.